We begin with the raw amino-acid sequence, 400 residues long: Argininosuccinate synthase (400 aa).

Residues 10-18 (AYSGGVDTS) and Ala38 contribute to the ATP site. Tyr89 contributes to the L-citrulline binding site. Residue Gly119 participates in ATP binding. Positions 121, 125, and 126 each coordinate L-aspartate. Asn125 lines the L-citrulline pocket. Residues Arg129, Ser177, Glu262, and Tyr274 each coordinate L-citrulline.

Belongs to the argininosuccinate synthase family. Type 1 subfamily. Homotetramer.

The protein resides in the cytoplasm. It carries out the reaction L-citrulline + L-aspartate + ATP = 2-(N(omega)-L-arginino)succinate + AMP + diphosphate + H(+). It functions in the pathway amino-acid biosynthesis; L-arginine biosynthesis; L-arginine from L-ornithine and carbamoyl phosphate: step 2/3. The polypeptide is Argininosuccinate synthase (Trichodesmium erythraeum (strain IMS101)).